A 308-amino-acid polypeptide reads, in one-letter code: Ectoine dioxygenase (308 aa).

An L-ectoine-binding site is contributed by Gln-131. Residue Lys-137 coordinates 2-oxoglutarate. 3 residues coordinate Fe cation: His-148, Asp-150, and His-249.

This sequence belongs to the PhyH family. EctD subfamily. As to quaternary structure, homodimer. Requires Fe(2+) as cofactor.

The enzyme catalyses L-ectoine + 2-oxoglutarate + O2 = 5-hydroxyectoine + succinate + CO2. Functionally, involved in the biosynthesis of 5-hydroxyectoine, called compatible solute, which helps organisms to survive extreme osmotic stress by acting as a highly soluble organic osmolyte. Catalyzes the 2-oxoglutarate-dependent selective hydroxylation of L-ectoine to yield (4S,5S)-5-hydroxyectoine. This is Ectoine dioxygenase from Bordetella bronchiseptica (strain ATCC BAA-588 / NCTC 13252 / RB50) (Alcaligenes bronchisepticus).